The following is a 358-amino-acid chain: MKFSQVATTAAIFAGLTTAEIAYVTQTRGVTVGETATVATTVTVGATVTGGDQGQDQVQQSAAPEAGDIQQSAVPEADDIQQSAVPEAEPTADADGGNGIAITEVFTTTIMGQEIVYSGVYYSYGEEHTYGDVQVQTLTIGGGGFPSDDQYPTTEVSAEASPSAVTTSSAVATPDAKVPDSTKDASQPAATTASGSSSGSNDFSGVKDTQFAQQILDAHNKKRARHGVPDLTWDATVYEYAQKFADQYSCSGNLQHSGGKYGENLAVGYADGAAALQAWYEEAGKDGLSYSYGSSSVYNHFTQVVWKSTTKLGCAYKDCRAQNWGLYVVCSYDPAGNVMGTDPKTGKSYMAENVLRPQ.

The first 19 residues, 1 to 19 (MKFSQVATTAAIFAGLTTA), serve as a signal peptide directing secretion. Low complexity-rich tracts occupy residues 48–63 (VTGG…QSAA), 153–174 (TTEV…VATP), and 189–200 (AATTASGSSSGS). 2 disordered regions span residues 48–98 (VTGG…DGGN) and 144–203 (GFPS…SNDF). The region spanning 216 to 332 (LDAHNKKRAR…NWGLYVVCSY (117 aa)) is the SCP domain.

The protein belongs to the CRISP family.

The protein localises to the secreted. Functionally, secreted protein that acts as a virulence factor during infections such as in posttraumatic corneal infections. Acts as an important antigen in patients with systemic candidiasis and plays a role in the protection against phagocyte attack. The protein is Secreted protein RBT4 (RBT4) of Candida albicans (strain SC5314 / ATCC MYA-2876) (Yeast).